The sequence spans 360 residues: Mediator of RNA polymerase II transcription subunit 6 (360 aa).

Disordered stretches follow at residues 186 to 238 (PAQP…NDPL) and 316 to 360 (AAAA…PGAA). Composition is skewed to low complexity over residues 190-205 (SAGA…YTAS) and 316-325 (AAAAAANANA).

It belongs to the Mediator complex subunit 6 family. Component of the Mediator complex.

Its subcellular location is the nucleus. Component of the Mediator complex, a coactivator involved in the regulated transcription of nearly all RNA polymerase II-dependent genes. Mediator functions as a bridge to convey information from gene-specific regulatory proteins to the basal RNA polymerase II transcription machinery. Mediator is recruited to promoters by direct interactions with regulatory proteins and serves as a scaffold for the assembly of a functional preinitiation complex with RNA polymerase II and the general transcription factors. In Neurospora crassa (strain ATCC 24698 / 74-OR23-1A / CBS 708.71 / DSM 1257 / FGSC 987), this protein is Mediator of RNA polymerase II transcription subunit 6 (med-6).